The sequence spans 194 residues: Surfactant protein C (194 aa).

Positions Met-1–Arg-21 are disordered. Residues Met-1 to Gln-23 constitute a propeptide that is removed on maturation. Residues Cys-28 and Cys-29 are each lipidated (S-palmitoyl cysteine). Residues His-59 to Ile-194 constitute a propeptide that is removed on maturation. The BRICHOS domain maps to Phe-95 to Ile-194. Cysteines 122 and 186 form a disulfide. The interval Ser-149–Ser-170 is disordered.

It is found in the secreted. Its subcellular location is the extracellular space. It localises to the surface film. Its function is as follows. Pulmonary surfactant associated proteins promote alveolar stability by lowering the surface tension at the air-liquid interface in the peripheral air spaces. In Rattus norvegicus (Rat), this protein is Surfactant protein C.